Here is a 215-residue protein sequence, read N- to C-terminus: Nascent polypeptide-associated complex subunit alpha-2 (215 aa).

Positions 1 to 51 are disordered; the sequence is MPGEATETVPATEQELPQSQAETGSGTASDSGESVPGIEEQDSTQTTTQKA. A compositionally biased stretch (polar residues) spans 9 to 32; sequence VPATEQELPQSQAETGSGTASDSG. Phosphoserine is present on residues Ser43 and Ser132. Residues 70–135 form the NAC-A/B domain; sequence SRSEKRARKA…AKIQDLSQQA (66 aa). The residue at position 142 (Lys142) is an N6-acetyllysine; alternate. Lys142 is covalently cross-linked (Glycyl lysine isopeptide (Lys-Gly) (interchain with G-Cter in SUMO2); alternate). Position 161 is a phosphothreonine (Thr161). A phosphoserine mark is found at Ser166, Ser186, Ser191, and Ser203. One can recognise a UBA domain in the interval 176 to 213; that stretch reads VEVKDVKLVMSQANVSRAKAVRALKNNSNDIVNAIMEL. Thr214 bears the Phosphothreonine mark.

It belongs to the NAC-alpha family. As to quaternary structure, part of the nascent polypeptide-associated complex (NAC), consisting of NACA and BTF3. NAC associates with ribosomes through the BTF3 subunit. Both subunits can contact nascent polypeptide chains. As to expression, expressed specifically in testis and skeletal muscle.

The protein localises to the cytoplasm. It localises to the nucleus. Functionally, prevents inappropriate targeting of non-secretory polypeptides to the endoplasmic reticulum (ER). Binds to nascent polypeptide chains as they emerge from the ribosome and blocks their interaction with the signal recognition particle (SRP), which normally targets nascent secretory peptides to the ER. Also reduces the inherent affinity of ribosomes for protein translocation sites in the ER membrane (M sites). This is Nascent polypeptide-associated complex subunit alpha-2 (NACA2) from Homo sapiens (Human).